Here is a 51-residue protein sequence, read N- to C-terminus: MREKIRLVSSAKTGHFYTTTKNKKEMPNKMEIKKYDPVVRKHVMYKEAKIK.

The protein belongs to the bacterial ribosomal protein bL33 family.

This Francisella tularensis subsp. tularensis (strain FSC 198) protein is Large ribosomal subunit protein bL33.